The chain runs to 39 residues: Fructose 5-dehydrogenase [NADP(+)] (39 aa).

It carries out the reaction D-fructose + NADP(+) = 5-dehydro-D-fructose + NADPH + H(+). This Erwinia citreus protein is Fructose 5-dehydrogenase [NADP(+)].